Reading from the N-terminus, the 641-residue chain is Serine/threonine-protein kinase pink-1, mitochondrial (641 aa).

The N-terminal 74 residues, 1–74, are a transit peptide targeting the mitochondrion; sequence MSMKRFGKAA…TRHGRVFRPF (74 aa). The 347-residue stretch at 137 to 483 folds into the Protein kinase domain; that stretch reads YEFGEFLGQG…AANALNLSLF (347 aa). ATP is bound by residues 143-151 and lysine 199; that span reads LGQGCNAAV. The Proton acceptor role is filled by aspartate 338.

This sequence belongs to the protein kinase superfamily. Ser/Thr protein kinase family. It depends on Mg(2+) as a cofactor. In terms of processing, autophosphorylated.

The protein localises to the mitochondrion. It catalyses the reaction L-seryl-[protein] + ATP = O-phospho-L-seryl-[protein] + ADP + H(+). It carries out the reaction L-threonyl-[protein] + ATP = O-phospho-L-threonyl-[protein] + ADP + H(+). In terms of biological role, protects against mitochondrial dysfunction during cellular stress, potentially by phosphorylating mitochondrial proteins. Plays a role in mitophagy. The polypeptide is Serine/threonine-protein kinase pink-1, mitochondrial (pink-1) (Caenorhabditis elegans).